Reading from the N-terminus, the 356-residue chain is NADH dehydrogenase (ubiquinone) complex I, assembly factor 6 homolog (356 aa).

A mitochondrion-targeting transit peptide spans 1-41; that stretch reads MIRNSGRILFNSLKNSNVKLINRNVIINSNIRLFSTSTNNT.

The protein belongs to the NDUFAF6 family.

The protein resides in the mitochondrion inner membrane. In terms of biological role, involved in the assembly of mitochondrial NADH:ubiquinone oxidoreductase complex (complex I) at early stages. The polypeptide is NADH dehydrogenase (ubiquinone) complex I, assembly factor 6 homolog (Dictyostelium discoideum (Social amoeba)).